The following is a 120-amino-acid chain: Ribosome-binding factor A (120 aa).

It belongs to the RbfA family. Monomer. Binds 30S ribosomal subunits, but not 50S ribosomal subunits or 70S ribosomes.

The protein resides in the cytoplasm. Its function is as follows. One of several proteins that assist in the late maturation steps of the functional core of the 30S ribosomal subunit. Associates with free 30S ribosomal subunits (but not with 30S subunits that are part of 70S ribosomes or polysomes). Required for efficient processing of 16S rRNA. May interact with the 5'-terminal helix region of 16S rRNA. This chain is Ribosome-binding factor A, found in Chlorobaculum tepidum (strain ATCC 49652 / DSM 12025 / NBRC 103806 / TLS) (Chlorobium tepidum).